A 657-amino-acid polypeptide reads, in one-letter code: L-glutamate oxidase precursor (657 aa).

The N-terminal stretch at 1–12 (MTETPRDNSATR) is a signal peptide. Glu-86, Ala-87, Arg-95, Met-120, Arg-121, Met-350, Glu-639, Trp-647, and Ile-648 together coordinate FAD.

This sequence belongs to the flavin monoamine oxidase family. LGOX subfamily. The mature enzyme is a heterohexamer composed of 2 alpha chains, 2 beta chains and 2 gamma chains (alpha2beta2gamma2). The cofactor is FAD. The precursor form is proteolytically cleaved by an endopeptidase into alpha, beta and gamma chains, which form the stable mature enzyme.

Its subcellular location is the secreted. The catalysed reaction is L-glutamate + O2 + H2O = H2O2 + 2-oxoglutarate + NH4(+). With respect to regulation, proteinase K-treated enzyme exhibits improved affinity for the substrate, increased activity and increased thermostability. Functionally, catalyzes the oxidative deamination of L-glutamate to 2-ketoglutarate along with the production of ammonia and hydrogen peroxide. Exhibits strict specificity for L-glutamate, and shows only very weak activity with L-glutamine. The polypeptide is L-glutamate oxidase precursor (Streptomyces diastatochromogenes).